The chain runs to 770 residues: Capsid protein (770 aa).

Polar residues predominate over residues 647–656 (MQQQPTTTDI). Disordered regions lie at residues 647 to 678 (MQQQ…QEGE) and 697 to 717 (WEDS…TQTV). A compositionally biased stretch (basic and acidic residues) spans 666–678 (RDTEVYHSSQEGE). Over residues 703 to 717 (EESGSQSSEEETQTV) the composition is skewed to low complexity.

It belongs to the anelloviridae capsid protein family.

The protein localises to the virion. In terms of biological role, self assemble to form an icosahedral capsid. The polypeptide is Capsid protein (Torque teno virus (isolate Human/Japan/TRM1/1999) (TTV)).